A 117-amino-acid polypeptide reads, in one-letter code: Large ribosomal subunit protein uL24 (117 aa).

It belongs to the universal ribosomal protein uL24 family. Part of the 50S ribosomal subunit.

One of two assembly initiator proteins, it binds directly to the 5'-end of the 23S rRNA, where it nucleates assembly of the 50S subunit. Functionally, one of the proteins that surrounds the polypeptide exit tunnel on the outside of the subunit. This is Large ribosomal subunit protein uL24 from Thermosynechococcus vestitus (strain NIES-2133 / IAM M-273 / BP-1).